The chain runs to 425 residues: Serine--tRNA ligase (425 aa).

2 disordered regions span residues 43 to 69 (QRSSLQAEGNRIGKEVGQRIQQGSDPK) and 108 to 134 (LPNLPSPDCPEGRDENDNQERHRWGKP). Residues 117-134 (PEGRDENDNQERHRWGKP) show a composition bias toward basic and acidic residues. 233-235 (TAE) serves as a coordination point for L-serine. 264-266 (RRE) lines the ATP pocket. L-serine is bound at residue E287. 351–354 (EISS) contacts ATP. An L-serine-binding site is contributed by S385.

The protein belongs to the class-II aminoacyl-tRNA synthetase family. Type-1 seryl-tRNA synthetase subfamily. As to quaternary structure, homodimer. The tRNA molecule binds across the dimer.

It localises to the cytoplasm. It carries out the reaction tRNA(Ser) + L-serine + ATP = L-seryl-tRNA(Ser) + AMP + diphosphate + H(+). It catalyses the reaction tRNA(Sec) + L-serine + ATP = L-seryl-tRNA(Sec) + AMP + diphosphate + H(+). It functions in the pathway aminoacyl-tRNA biosynthesis; selenocysteinyl-tRNA(Sec) biosynthesis; L-seryl-tRNA(Sec) from L-serine and tRNA(Sec): step 1/1. Catalyzes the attachment of serine to tRNA(Ser). Is also able to aminoacylate tRNA(Sec) with serine, to form the misacylated tRNA L-seryl-tRNA(Sec), which will be further converted into selenocysteinyl-tRNA(Sec). This is Serine--tRNA ligase from Prochlorococcus marinus (strain MIT 9313).